Reading from the N-terminus, the 362-residue chain is Phosphoserine aminotransferase (362 aa).

2 residues coordinate L-glutamate: Ser-9 and Arg-42. Pyridoxal 5'-phosphate contacts are provided by residues 76–77 (GR), Trp-102, Thr-153, Asp-174, and Gln-197. Position 198 is an N6-(pyridoxal phosphate)lysine (Lys-198). 239–240 (NT) contributes to the pyridoxal 5'-phosphate binding site.

This sequence belongs to the class-V pyridoxal-phosphate-dependent aminotransferase family. SerC subfamily. In terms of assembly, homodimer. It depends on pyridoxal 5'-phosphate as a cofactor.

It is found in the cytoplasm. The enzyme catalyses O-phospho-L-serine + 2-oxoglutarate = 3-phosphooxypyruvate + L-glutamate. It carries out the reaction 4-(phosphooxy)-L-threonine + 2-oxoglutarate = (R)-3-hydroxy-2-oxo-4-phosphooxybutanoate + L-glutamate. The protein operates within amino-acid biosynthesis; L-serine biosynthesis; L-serine from 3-phospho-D-glycerate: step 2/3. Its pathway is cofactor biosynthesis; pyridoxine 5'-phosphate biosynthesis; pyridoxine 5'-phosphate from D-erythrose 4-phosphate: step 3/5. In terms of biological role, catalyzes the reversible conversion of 3-phosphohydroxypyruvate to phosphoserine and of 3-hydroxy-2-oxo-4-phosphonooxybutanoate to phosphohydroxythreonine. This Escherichia coli O6:K15:H31 (strain 536 / UPEC) protein is Phosphoserine aminotransferase.